Reading from the N-terminus, the 196-residue chain is Ankyrin repeat domain-containing protein 66 (196 aa).

ANK repeat units lie at residues 7 to 37 (SDMT…DPNY), 43 to 72 (NDRT…RPCL), and 76 to 105 (VGWT…AIDA). Residues 152–196 (ERDEDWDAKKRELELSLPSLNQNMNKKNKKSRGPTRPSNTKGRRV) form a disordered region. Residues 187–196 (RPSNTKGRRV) show a composition bias toward polar residues.

The polypeptide is Ankyrin repeat domain-containing protein 66 (ANKRD66) (Homo sapiens (Human)).